Reading from the N-terminus, the 177-residue chain is Ubiquinol-cytochrome c reductase iron-sulfur subunit (177 aa).

The chain crosses the membrane as a helical span at residues 18–38; sequence IVLTASSVAAVGAACAFWPII. In terms of domain architecture, Rieske spans 88–175; it reads ARAVKMSELI…YIFISDKKIR (88 aa). [2Fe-2S] cluster is bound by residues cysteine 120, histidine 122, cysteine 139, and histidine 142. An intrachain disulfide couples cysteine 125 to cysteine 141.

It belongs to the Rieske iron-sulfur protein family. In terms of assembly, the main subunits of complex b-c1 are: cytochrome b, cytochrome c1 and the Rieske protein. It depends on [2Fe-2S] cluster as a cofactor.

It localises to the cell membrane. It carries out the reaction a quinol + 2 Fe(III)-[cytochrome c](out) = a quinone + 2 Fe(II)-[cytochrome c](out) + 2 H(+)(out). In terms of biological role, component of the ubiquinol-cytochrome c reductase complex (complex III or cytochrome b-c1 complex), which is a respiratory chain that generates an electrochemical potential coupled to ATP synthesis. In Rickettsia prowazekii (strain Madrid E), this protein is Ubiquinol-cytochrome c reductase iron-sulfur subunit (petA).